Reading from the N-terminus, the 395-residue chain is Calsequestrin-1 (395 aa).

Residues Met-1–Gly-28 form the signal peptide. The residue at position 37 (Tyr-37) is a Phosphotyrosine. The residue at position 75 (Ser-75) is a Phosphoserine. Thr-118 is subject to Phosphothreonine. A Phosphoserine modification is found at Ser-210. N-linked (GlcNAc...) asparagine glycosylation occurs at Asn-344. The segment at Glu-376–Asp-395 is disordered.

Belongs to the calsequestrin family. Monomer; increases in response to a depletion of intracellular calcium. Homodimer. Homotetramer and homopolymer. Can form linear homooligomers. Ca(2+) ions promote oligomerization. Interacts (via C-terminal end and preferentially with the monomeric form) with STIM1; this interaction increases in response to a depletion of intracellular calcium, decreases both STIM1 aggregation and clustering, interaction of STIM1 with ORAI1 and store-operated Ca(2+) entry (SOCE) activity. Interacts with ASPH and TRDN. Post-translationally, N-glycosylated. In terms of tissue distribution, detected in skeletal muscle (at protein level). Detected in skeletal muscle.

The protein resides in the endoplasmic reticulum. The protein localises to the sarcoplasmic reticulum. It is found in the sarcoplasmic reticulum lumen. It localises to the mitochondrion matrix. Its subcellular location is the sarcoplasmic reticulum membrane. Its function is as follows. Calsequestrin is a high-capacity, moderate affinity, calcium-binding protein and thus acts as an internal calcium store in muscle. Calcium ions are bound by clusters of acidic residues at the protein surface, often at the interface between subunits. Can bind around 80 Ca(2+) ions. Regulates the release of lumenal Ca(2+) via the calcium release channel RYR1; this plays an important role in triggering muscle contraction. Negatively regulates store-operated Ca(2+) entry (SOCE) activity. The chain is Calsequestrin-1 (CASQ1) from Oryctolagus cuniculus (Rabbit).